The sequence spans 535 residues: Probable serine/threonine protein phosphatase 2A regulatory subunit B''delta (535 aa).

Residues Ser-67 to Arg-104 are disordered. 2 EF-hand domains span residues Val-174–Leu-209 and Ser-387–Arg-422. Residues Asp-400, Asp-402, Asn-404, and Glu-411 each contribute to the Ca(2+) site.

PP2A consists of a common heterodimeric core enzyme, composed of a 36 kDa catalytic subunit (subunit C) and a 65 kDa constant regulatory subunit (PR65 or subunit A), that associates with a variety of regulatory subunits. Proteins that associate with the core dimer include three families of regulatory subunits B (the R2/B/PR55/B55, R3/B''/PR72/PR130/PR59 and R5/B'/B56 families) and cell signaling molecules.

Probable regulatory subunit of type 2A protein phosphatase. This Arabidopsis thaliana (Mouse-ear cress) protein is Probable serine/threonine protein phosphatase 2A regulatory subunit B''delta (B''DELTA).